The chain runs to 962 residues: Exportin-T (962 aa).

Residue methionine 1 is modified to N-acetylmethionine. Lysine 634 carries the N6-acetyllysine modification.

As to quaternary structure, found in a complex with XPOT, Ran and tRNA. Probably found in a complex with nucleoporins. Interacts with Ran and tRNA in a GTP-dependent manner.

It is found in the nucleus. The protein localises to the cytoplasm. Functionally, mediates the nuclear export of aminoacylated tRNAs. In the nucleus binds to tRNA and to the GTPase Ran in its active GTP-bound form. Docking of this trimeric complex to the nuclear pore complex (NPC) is mediated through binding to nucleoporins. Upon transit of a nuclear export complex into the cytoplasm, disassembling of the complex and hydrolysis of Ran-GTP to Ran-GDP (induced by RANBP1 and RANGAP1, respectively) cause release of the tRNA from the export receptor. XPOT then return to the nuclear compartment and mediate another round of transport. The directionality of nuclear export is thought to be conferred by an asymmetric distribution of the GTP- and GDP-bound forms of Ran between the cytoplasm and nucleus. The sequence is that of Exportin-T (XPOT) from Pongo abelii (Sumatran orangutan).